A 412-amino-acid polypeptide reads, in one-letter code: Probable ribonuclease FAU-1 (412 aa).

The protein belongs to the FAU-1 family.

In terms of biological role, probable RNase involved in rRNA stability through maturation and/or degradation of precursor rRNAs. Binds to RNA in loop regions with AU-rich sequences. The protein is Probable ribonuclease FAU-1 of Sulfurisphaera tokodaii (strain DSM 16993 / JCM 10545 / NBRC 100140 / 7) (Sulfolobus tokodaii).